The sequence spans 154 residues: 6,7-dimethyl-8-ribityllumazine synthase (154 aa).

5-amino-6-(D-ribitylamino)uracil contacts are provided by residues Phe22, Ala56–Glu58, and Ala80–Ile82. Position 85–86 (Ala85–Thr86) interacts with (2S)-2-hydroxy-3-oxobutyl phosphate. Catalysis depends on His88, which acts as the Proton donor. Phe113 is a 5-amino-6-(D-ribitylamino)uracil binding site. A (2S)-2-hydroxy-3-oxobutyl phosphate-binding site is contributed by Arg127.

Belongs to the DMRL synthase family.

The catalysed reaction is (2S)-2-hydroxy-3-oxobutyl phosphate + 5-amino-6-(D-ribitylamino)uracil = 6,7-dimethyl-8-(1-D-ribityl)lumazine + phosphate + 2 H2O + H(+). It functions in the pathway cofactor biosynthesis; riboflavin biosynthesis; riboflavin from 2-hydroxy-3-oxobutyl phosphate and 5-amino-6-(D-ribitylamino)uracil: step 1/2. Catalyzes the formation of 6,7-dimethyl-8-ribityllumazine by condensation of 5-amino-6-(D-ribitylamino)uracil with 3,4-dihydroxy-2-butanone 4-phosphate. This is the penultimate step in the biosynthesis of riboflavin. The protein is 6,7-dimethyl-8-ribityllumazine synthase of Agathobacter rectalis (strain ATCC 33656 / DSM 3377 / JCM 17463 / KCTC 5835 / VPI 0990) (Eubacterium rectale).